A 144-amino-acid polypeptide reads, in one-letter code: Granulocyte-macrophage colony-stimulating factor (144 aa).

Positions 1-17 (MWLQGLLLLGTVACSIS) are cleaved as a signal peptide. An O-linked (GalNAc...) serine glycan is attached at serine 24. O-linked (GalNAc...) threonine glycosylation is present at threonine 27. 2 N-linked (GlcNAc...) asparagine glycosylation sites follow: asparagine 44 and asparagine 54. 2 disulfides stabilise this stretch: cysteine 71/cysteine 113 and cysteine 105/cysteine 138.

Belongs to the GM-CSF family. As to quaternary structure, monomer. The signaling GM-CSF receptor complex is a dodecamer of two head-to-head hexamers of two alpha, two beta, and two ligand subunits.

It localises to the secreted. Cytokine that stimulates the growth and differentiation of hematopoietic precursor cells from various lineages, including granulocytes, macrophages, eosinophils and erythrocytes. The sequence is that of Granulocyte-macrophage colony-stimulating factor (CSF2) from Chlorocebus aethiops (Green monkey).